Consider the following 328-residue polypeptide: Mitochondrial GTPase 1 (328 aa).

Residues 10 to 199 enclose the CP-type G domain; the sequence is KTTLKRLRDS…MVDTPGIMLP (190 aa). GTP-binding positions include 57-60, 143-148, and Gly195; these read NKCD and NVGKSS.

The protein belongs to the TRAFAC class YlqF/YawG GTPase family. MTG1 subfamily.

Its subcellular location is the mitochondrion inner membrane. Functionally, mitochondrial GTPase involved in assembly of the large ribosomal subunit. Plays a role in expression of the mitochondrial translational machinery. The chain is Mitochondrial GTPase 1 from Schizosaccharomyces japonicus (strain yFS275 / FY16936) (Fission yeast).